A 483-amino-acid chain; its full sequence is Glutamyl-tRNA(Gln) amidotransferase subunit A (483 aa).

Active-site charge relay system residues include Lys-75 and Ser-150. The active-site Acyl-ester intermediate is the Ser-174.

The protein belongs to the amidase family. GatA subfamily. As to quaternary structure, heterotrimer of A, B and C subunits.

The catalysed reaction is L-glutamyl-tRNA(Gln) + L-glutamine + ATP + H2O = L-glutaminyl-tRNA(Gln) + L-glutamate + ADP + phosphate + H(+). Allows the formation of correctly charged Gln-tRNA(Gln) through the transamidation of misacylated Glu-tRNA(Gln) in organisms which lack glutaminyl-tRNA synthetase. The reaction takes place in the presence of glutamine and ATP through an activated gamma-phospho-Glu-tRNA(Gln). This is Glutamyl-tRNA(Gln) amidotransferase subunit A from Legionella pneumophila (strain Paris).